Here is a 160-residue protein sequence, read N- to C-terminus: Cyclic pyranopterin monophosphate synthase (160 aa).

Substrate contacts are provided by residues 76–78 (LCH) and 114–115 (ME). D129 is an active-site residue.

This sequence belongs to the MoaC family. As to quaternary structure, homohexamer; trimer of dimers.

The catalysed reaction is (8S)-3',8-cyclo-7,8-dihydroguanosine 5'-triphosphate = cyclic pyranopterin phosphate + diphosphate. The protein operates within cofactor biosynthesis; molybdopterin biosynthesis. Its function is as follows. Catalyzes the conversion of (8S)-3',8-cyclo-7,8-dihydroguanosine 5'-triphosphate to cyclic pyranopterin monophosphate (cPMP). This is Cyclic pyranopterin monophosphate synthase from Mesorhizobium japonicum (strain LMG 29417 / CECT 9101 / MAFF 303099) (Mesorhizobium loti (strain MAFF 303099)).